The sequence spans 348 residues: MHFLDQAKIFIKSGDGGPGAVSFRREKYIEYGGPDGGNGGKGGDIVFEAVAGLNTLIDFRYTQHFKAKRGTPGAGRDRTGAGGPDLVIQVPVGTQILADDEERTLLADLTKAGERVHFLRGGDGGRGNASYKTSTNRAPRQHGPGWPGEEMWVWLRLKLLADAGLVGLPNAGKSTFINAVTNAQAKVGAYAFTTLRPQLGVVSHKGHEFVIADIPGLIEGAAEGAGVGDRFLGHIERCRVLLHLVDANDADVATSYRVVRDELEAYGADLIDKPVIVALNKIDTLDDELIAALSAELEAESGHPVMALSGASGAGIEPVLDKLLEAIGQPEPGPDADEEEKGGDWSPI.

Residues 1-160 enclose the Obg domain; it reads MHFLDQAKIF…MWVWLRLKLL (160 aa). Positions 120–145 are disordered; sequence RGGDGGRGNASYKTSTNRAPRQHGPG. In terms of domain architecture, OBG-type G spans 161–328; the sequence is ADAGLVGLPN…VLDKLLEAIG (168 aa). GTP contacts are provided by residues 167 to 174, 192 to 196, 213 to 216, 280 to 283, and 309 to 311; these read GLPNAGKS, FTTLR, DIPG, NKID, and SGA. Mg(2+)-binding residues include serine 174 and threonine 194. The interval 326–348 is disordered; the sequence is AIGQPEPGPDADEEEKGGDWSPI.

It belongs to the TRAFAC class OBG-HflX-like GTPase superfamily. OBG GTPase family. In terms of assembly, monomer. The cofactor is Mg(2+).

The protein resides in the cytoplasm. In terms of biological role, an essential GTPase which binds GTP, GDP and possibly (p)ppGpp with moderate affinity, with high nucleotide exchange rates and a fairly low GTP hydrolysis rate. Plays a role in control of the cell cycle, stress response, ribosome biogenesis and in those bacteria that undergo differentiation, in morphogenesis control. The chain is GTPase Obg from Sphingopyxis alaskensis (strain DSM 13593 / LMG 18877 / RB2256) (Sphingomonas alaskensis).